We begin with the raw amino-acid sequence, 184 residues long: MMSQPAKVLLLYAHPESQDSVANRVLLKPATQLSNVTVHDLYAHYPDFFIDIPREQALLREHEVIVFQHPLYTYSCPALLKEWLDRVLSRGFASGPGGNQLAGKYWRSVITTGEPESAYRYDALNRYPMSDVLRPFELAAGMCRMHWLSPIIIYWARRQSAQELASHARAYGDWLANPLSPGGC.

The protein belongs to the NAD(P)H dehydrogenase (quinone) family. KefG subfamily. Interacts with KefB.

It is found in the cell inner membrane. It catalyses the reaction a quinone + NADH + H(+) = a quinol + NAD(+). The catalysed reaction is a quinone + NADPH + H(+) = a quinol + NADP(+). Regulatory subunit of a potassium efflux system that confers protection against electrophiles. Required for full activity of KefB. This chain is Glutathione-regulated potassium-efflux system ancillary protein KefG, found in Escherichia coli O1:K1 / APEC.